Consider the following 352-residue polypeptide: E3 ubiquitin-protein ligase RNF146 (352 aa).

The RING-type zinc-finger motif lies at 36–74 (CAICLQTCVHPVSLPCKHVFCYLCVKGASWLGKRCALCR). Glycyl lysine isopeptide (Lys-Gly) (interchain with G-Cter in ubiquitin) cross-links involve residues lysine 84 and lysine 94. One can recognise a WWE domain in the interval 91-167 (EELKAASRGN…EHGRRRKIKR (77 aa)). 3 residues coordinate a glycoprotein: tyrosine 107, arginine 110, and tryptophan 114. Lysine 130 is covalently cross-linked (Glycyl lysine isopeptide (Lys-Gly) (interchain with G-Cter in ubiquitin)). Residues tyrosine 144, glutamine 153, arginine 163, and lysine 175 each coordinate a glycoprotein. Residue lysine 175 forms a Glycyl lysine isopeptide (Lys-Gly) (interchain with G-Cter in ubiquitin) linkage. 3 disordered regions span residues 195-242 (SSAD…AGAS), 259-293 (ERSH…ASSD), and 317-352 (NQTV…VTEV). Low complexity predominate over residues 197-210 (ADGADSGSAHTGAS). A compositionally biased stretch (polar residues) spans 215–233 (VPSSTRPLTSVDGQLTSPV). A compositionally biased stretch (acidic residues) spans 282-293 (STEETESDASSD). Serine 288 and serine 292 each carry phosphoserine.

As to quaternary structure, can form homooligomers. Interacts with PARsylated AXIN1, AXIN2, BLZF1, CASC3, H1-2, IPO7, LIG3, NCL, PARP1, XRCC1, XRCC5 and XRCC6. Interacts with DDB1, DHX15, IQGAP1, LRPPRC, PARP2, PRKDC, RUVBL2, TNKS1 and TNKS2. Binding often leads to interactor ubiquitination, in the presence of the appropriate E1 and E2 enzymes, and proteasomal degradation. Post-translationally, ubiquitinated; autoubiquitinated. Autoubiquitination is enhanced upon poly(ADP-ribose)-binding.

The protein resides in the cytoplasm. Its subcellular location is the cytosol. It is found in the nucleus. The enzyme catalyses S-ubiquitinyl-[E2 ubiquitin-conjugating enzyme]-L-cysteine + [acceptor protein]-L-lysine = [E2 ubiquitin-conjugating enzyme]-L-cysteine + N(6)-ubiquitinyl-[acceptor protein]-L-lysine.. It participates in protein modification; protein ubiquitination. Its function is as follows. E3 ubiquitin-protein ligase that specifically binds poly-ADP-ribosylated (PARsylated) proteins and mediates their ubiquitination and subsequent degradation. May regulate many important biological processes, such as cell survival and DNA damage response. Acts as an activator of the Wnt signaling pathway by mediating the ubiquitination of PARsylated AXIN1 and AXIN2, 2 key components of the beta-catenin destruction complex. Acts in cooperation with tankyrase proteins (TNKS and TNKS2), which mediate PARsylation of target proteins AXIN1, AXIN2, BLZF1, CASC3, TNKS and TNKS2. Recognizes and binds tankyrase-dependent PARsylated proteins via its WWE domain and mediates their ubiquitination, leading to their degradation. Different ubiquitin linkage types have been observed: TNKS2 undergoes ubiquitination at 'Lys-48' and 'Lys-63', while AXIN1 is only ubiquitinated at 'Lys-48'. May regulate TNKS and TNKS2 subcellular location, preventing aggregation at a centrosomal location. Neuroprotective protein. Protects the brain against N-methyl-D-aspartate (NMDA) receptor-mediated glutamate excitotoxicity and ischemia, by interfering with PAR-induced cell death, called parthanatos. Prevents nuclear translocation of AIFM1 in a PAR-binding dependent manner. Does not affect PARP1 activation. Protects against cell death induced by DNA damaging agents, such as N-methyl-N-nitro-N-nitrosoguanidine (MNNG) and rescues cells from G1 arrest. Promotes cell survival after gamma-irradiation. Facilitates DNA repair. In Rattus norvegicus (Rat), this protein is E3 ubiquitin-protein ligase RNF146 (Rnf146).